The sequence spans 98 residues: Cytochrome c2 (98 aa).

Glutamine 1 carries the pyrrolidone carboxylic acid modification. Cysteine 10, cysteine 13, histidine 14, and methionine 76 together coordinate heme c.

This sequence belongs to the cytochrome c family. Post-translationally, binds 1 heme c group covalently per subunit.

The protein resides in the periplasm. Cytochrome c2 is found mainly in purple, non-sulfur, photosynthetic bacteria where it functions as the electron donor to the oxidized bacteriochlorophyll in the photophosphorylation pathway. However, it may also have a role in the respiratory chain and is found in some non-photosynthetic bacteria. This Rhodoplanes tepidamans (Rhodoplanes cryptolactis) protein is Cytochrome c2.